The sequence spans 277 residues: Shikimate dehydrogenase (NADP(+)) (277 aa).

Residues 15 to 17 and threonine 62 contribute to the shikimate site; that span reads SKS. Lysine 66 functions as the Proton acceptor in the catalytic mechanism. Position 78 (glutamate 78) interacts with NADP(+). Residues asparagine 87 and aspartate 103 each coordinate shikimate. NADP(+)-binding positions include 127 to 131, 151 to 156, and glycine 238; these read GAGGA and NRTHEK.

Belongs to the shikimate dehydrogenase family. As to quaternary structure, homodimer.

The enzyme catalyses shikimate + NADP(+) = 3-dehydroshikimate + NADPH + H(+). It functions in the pathway metabolic intermediate biosynthesis; chorismate biosynthesis; chorismate from D-erythrose 4-phosphate and phosphoenolpyruvate: step 4/7. In terms of biological role, involved in the biosynthesis of the chorismate, which leads to the biosynthesis of aromatic amino acids. Catalyzes the reversible NADPH linked reduction of 3-dehydroshikimate (DHSA) to yield shikimate (SA). This chain is Shikimate dehydrogenase (NADP(+)), found in Shewanella frigidimarina (strain NCIMB 400).